A 310-amino-acid polypeptide reads, in one-letter code: Alpha/beta hydrolase domain-containing protein 17C (310 aa).

Catalysis depends on charge relay system residues S192, D257, and H286.

It belongs to the AB hydrolase superfamily. ABHD17 family. In terms of processing, palmitoylated on cysteine residues located in a cysteine cluster at the N-terminus which promotes membrane localization.

It localises to the recycling endosome membrane. It is found in the cell projection. The protein resides in the dendritic spine. The protein localises to the postsynaptic density membrane. The enzyme catalyses S-hexadecanoyl-L-cysteinyl-[protein] + H2O = L-cysteinyl-[protein] + hexadecanoate + H(+). In terms of biological role, hydrolyzes fatty acids from S-acylated cysteine residues in proteins. The protein is Alpha/beta hydrolase domain-containing protein 17C of Xenopus tropicalis (Western clawed frog).